Consider the following 118-residue polypeptide: Basic phospholipase A2 nigroxin A (118 aa).

7 disulfides stabilise this stretch: C11–C70, C25–C117, C27–C43, C42–C98, C49–C91, C59–C84, and C77–C89. Residues Y26, G28, and G30 each coordinate Ca(2+). Residue H46 is part of the active site. D47 provides a ligand contact to Ca(2+). D92 is a catalytic residue.

The protein belongs to the phospholipase A2 family. Group I subfamily. D49 sub-subfamily. The cofactor is Ca(2+). As to expression, expressed by the venom gland.

Its subcellular location is the secreted. It carries out the reaction a 1,2-diacyl-sn-glycero-3-phosphocholine + H2O = a 1-acyl-sn-glycero-3-phosphocholine + a fatty acid + H(+). Its function is as follows. Snake venom phospholipase A2 (PLA2) that has only a weak enzymatic activity. It has a myotoxic activity in vivo (dystrophic effect). PLA2 catalyzes the calcium-dependent hydrolysis of the 2-acyl groups in 3-sn-phosphoglycerides. The chain is Basic phospholipase A2 nigroxin A from Micrurus nigrocinctus (Central American coral snake).